A 2122-amino-acid chain; its full sequence is Unique GC organizer UGO (2122 aa).

Transmembrane regions (helical) follow at residues phenylalanine 19–leucine 39, leucine 50–valine 70, threonine 82–isoleucine 102, valine 115–glycine 135, and valine 145–leucine 165. Disordered regions lie at residues alanine 337–alanine 403, phenylalanine 422–valine 532, aspartate 565–glutamine 591, histidine 627–asparagine 762, histidine 785–serine 815, methionine 848–arginine 870, serine 903–asparagine 949, arginine 999–arginine 1046, proline 1068–valine 1308, alanine 1328–glutamate 1368, alanine 1515–alanine 1540, alanine 1560–threonine 1608, and glutamine 1639–glycine 1727. Polar residues predominate over residues arginine 363–valine 374. Composition is skewed to basic and acidic residues over residues leucine 503–lysine 525, aspartate 565–alanine 585, and glycine 632–proline 645. Basic residues predominate over residues arginine 672–glycine 687. Low complexity predominate over residues serine 690–aspartate 699. Acidic residues predominate over residues leucine 707–serine 720. Residues arginine 725–arginine 735 are compositionally biased toward basic residues. Residues glutamate 741–arginine 750 show a composition bias toward low complexity. The span at serine 751–arginine 760 shows a compositional bias: basic and acidic residues. A glycan (N-linked (GlcNAc...) asparagine) is linked at asparagine 762. Basic residues predominate over residues methionine 848 to proline 860. 2 stretches are compositionally biased toward polar residues: residues arginine 999–threonine 1011 and serine 1072–isoleucine 1097. Asparagine 1000 carries an N-linked (GlcNAc...) asparagine glycan. Asparagine 1165 is a glycosylation site (N-linked (GlcNAc...) asparagine). Basic and acidic residues predominate over residues serine 1220–aspartate 1261. A compositionally biased stretch (basic residues) spans arginine 1262–alanine 1276. Basic and acidic residues-rich tracts occupy residues arginine 1277–serine 1289 and glycine 1345–glycine 1359. Residues alanine 1515–aspartate 1527 are compositionally biased toward polar residues. N-linked (GlcNAc...) asparagine glycosylation occurs at asparagine 1516. 2 stretches are compositionally biased toward low complexity: residues serine 1528 to alanine 1540 and threonine 1597 to threonine 1608. Polar residues predominate over residues leucine 1684–glutamine 1693. The next 5 membrane-spanning stretches (helical) occupy residues valine 1859–leucine 1879, methionine 1956–isoleucine 1976, isoleucine 1989–valine 2009, isoleucine 2017–valine 2037, and valine 2040–phenylalanine 2060. The interval aspartate 2102–alanine 2122 is disordered.

Interacts with guanylate cyclase GC; the interaction regulates guanylate cyclase GC trafficking and catalytic activity.

Its subcellular location is the cell membrane. In terms of biological role, in tachyzoites, required for the cellular trafficking of guanylate cyclase GC to the cell membrane and for GC guanylate cyclase activity. The chain is Unique GC organizer UGO from Toxoplasma gondii (strain ATCC 50853 / GT1).